Reading from the N-terminus, the 289-residue chain is Formamidopyrimidine-DNA glycosylase 1 (289 aa).

The active-site Schiff-base intermediate with DNA is the Pro-2. The active-site Proton donor is the Glu-3. The active-site Proton donor; for beta-elimination activity is Lys-61. 3 residues coordinate DNA: His-100, Arg-119, and Lys-165. The FPG-type zinc finger occupies 251-285 (DAYGREGENCRRCGAVIRRERFMNRSSFYCPRCQP). The Proton donor; for delta-elimination activity role is filled by Arg-275.

The protein belongs to the FPG family. In terms of assembly, monomer. It depends on Zn(2+) as a cofactor.

It catalyses the reaction Hydrolysis of DNA containing ring-opened 7-methylguanine residues, releasing 2,6-diamino-4-hydroxy-5-(N-methyl)formamidopyrimidine.. It carries out the reaction 2'-deoxyribonucleotide-(2'-deoxyribose 5'-phosphate)-2'-deoxyribonucleotide-DNA = a 3'-end 2'-deoxyribonucleotide-(2,3-dehydro-2,3-deoxyribose 5'-phosphate)-DNA + a 5'-end 5'-phospho-2'-deoxyribonucleoside-DNA + H(+). Its function is as follows. Involved in base excision repair of DNA damaged by oxidation or by mutagenic agents. Acts as a DNA glycosylase that recognizes and removes damaged bases. Has a preference for oxidized purines, such as 7,8-dihydro-8-oxoguanine (8-oxoG) when paired with C, G or T, as well as methyl-faPy (formanidopyrimidine residues) in poly(dG-dC) and spiroiminodihydantoin:C base pairs. Unlike its E.coli ortholog has no activity on 8-oxoG:A. Has AP (apurinic/apyrimidinic) lyase activity and introduces nicks in the DNA strand. Cleaves the DNA backbone by beta-delta elimination to generate a single-strand break at the site of the removed base with both 3'- and 5'-phosphates. Cleaves ssDNA containing an AP site. Complements the H(2)O(2) sensitivity of an M.smegmatis fpg disruption mutant; upon expression in M.smegmatis excises 8-oxoG from dsDNA. The polypeptide is Formamidopyrimidine-DNA glycosylase 1 (fpg1) (Mycobacterium tuberculosis (strain ATCC 25618 / H37Rv)).